A 247-amino-acid chain; its full sequence is 5-oxoprolinase subunit A 1 (247 aa).

Belongs to the LamB/PxpA family. In terms of assembly, forms a complex composed of PxpA, PxpB and PxpC.

The catalysed reaction is 5-oxo-L-proline + ATP + 2 H2O = L-glutamate + ADP + phosphate + H(+). Functionally, catalyzes the cleavage of 5-oxoproline to form L-glutamate coupled to the hydrolysis of ATP to ADP and inorganic phosphate. In Ralstonia nicotianae (strain ATCC BAA-1114 / GMI1000) (Ralstonia solanacearum), this protein is 5-oxoprolinase subunit A 1.